The sequence spans 351 residues: RCC1 repeat-containing protein C10F6.04 (351 aa).

4 RCC1 repeats span residues 1–48 (MLLS…LLDE), 50–106 (SQLW…IVHA), 108–162 (RRRV…CVTN), and 163–212 (EGNL…VLQE).

It localises to the cytoplasm. The protein resides in the nucleus. The polypeptide is RCC1 repeat-containing protein C10F6.04 (Schizosaccharomyces pombe (strain 972 / ATCC 24843) (Fission yeast)).